The chain runs to 220 residues: Ribose-5-phosphate isomerase A (220 aa).

Residues 25 to 28 (TGST), 80 to 83 (DGAD), and 93 to 96 (KGGG) contribute to the substrate site. Catalysis depends on Glu-102, which acts as the Proton acceptor. Lys-120 is a substrate binding site.

Belongs to the ribose 5-phosphate isomerase family. Homodimer.

The catalysed reaction is aldehydo-D-ribose 5-phosphate = D-ribulose 5-phosphate. Its pathway is carbohydrate degradation; pentose phosphate pathway; D-ribose 5-phosphate from D-ribulose 5-phosphate (non-oxidative stage): step 1/1. In terms of biological role, catalyzes the reversible conversion of ribose-5-phosphate to ribulose 5-phosphate. This Bacillus cereus (strain ATCC 14579 / DSM 31 / CCUG 7414 / JCM 2152 / NBRC 15305 / NCIMB 9373 / NCTC 2599 / NRRL B-3711) protein is Ribose-5-phosphate isomerase A.